Reading from the N-terminus, the 337-residue chain is Inositol 2-dehydrogenase (337 aa).

Belongs to the Gfo/Idh/MocA family. In terms of assembly, homotetramer.

It catalyses the reaction myo-inositol + NAD(+) = scyllo-inosose + NADH + H(+). Involved in the oxidation of myo-inositol (MI) to 2-keto-myo-inositol (2KMI or 2-inosose). In Pseudarthrobacter chlorophenolicus (strain ATCC 700700 / DSM 12829 / CIP 107037 / JCM 12360 / KCTC 9906 / NCIMB 13794 / A6) (Arthrobacter chlorophenolicus), this protein is Inositol 2-dehydrogenase.